Reading from the N-terminus, the 256-residue chain is SPX domain-containing protein 1 (256 aa).

The SPX domain maps to 1–155 (MKFGKSLSNQ…GDLMRLPFIQ (155 aa)). Positions 30-46 (KRLKLIGSKTADRPVKR) match the Bipartite nuclear localization signal motif.

In terms of assembly, interacts with PHR1 in a highly Pi-dependent manner.

It is found in the nucleus. Functionally, plays a positive role in plant adaptation to phosphate starvation. Inhibits PHR1 DNA-binding activity in a Pi-dependent manner. The polypeptide is SPX domain-containing protein 1 (Arabidopsis thaliana (Mouse-ear cress)).